Consider the following 72-residue polypeptide: Conotoxin im23a (72 aa).

An N-terminal signal peptide occupies residues 1–22 (MIMRMTLTLFVLVVMTAASASG). Positions 23–28 (DALTEA) are excised as a propeptide. 3 cysteine pairs are disulfide-bonded: cysteine 34-cysteine 41, cysteine 45-cysteine 55, and cysteine 56-cysteine 71.

Belongs to the conotoxin K superfamily. Expressed by the venom duct.

It is found in the secreted. In terms of biological role, neurotoxin that induces excitatory symptoms in mice following intracranial administration. No symptoms are observed after intraperitoneal and intravenous (tail vein) injections. The protein is Conotoxin im23a of Conus imperialis (Imperial cone).